The primary structure comprises 542 residues: Membrane protein insertase YidC (542 aa).

5 consecutive transmembrane segments (helical) span residues leucine 7 to phenylalanine 27, phenylalanine 338 to valine 358, methionine 417 to phenylalanine 437, leucine 455 to leucine 475, and phenylalanine 494 to tryptophan 514.

The protein belongs to the OXA1/ALB3/YidC family. Type 1 subfamily. As to quaternary structure, interacts with the Sec translocase complex via SecD. Specifically interacts with transmembrane segments of nascent integral membrane proteins during membrane integration.

Its subcellular location is the cell inner membrane. Its function is as follows. Required for the insertion and/or proper folding and/or complex formation of integral membrane proteins into the membrane. Involved in integration of membrane proteins that insert both dependently and independently of the Sec translocase complex, as well as at least some lipoproteins. Aids folding of multispanning membrane proteins. The sequence is that of Membrane protein insertase YidC from Actinobacillus pleuropneumoniae serotype 7 (strain AP76).